The primary structure comprises 1452 residues: Pleiotropic drug resistance protein 1 (1452 aa).

One can recognise an ABC transporter 1 domain in the interval 152–425; the sequence is LNYLHILPNR…FEYMGFICPE (274 aa). Residue 185-192 coordinates ATP; that stretch reads GPPSSGKT. An ABC transmembrane type-2 1 domain is found at 504–716; sequence LLKACTAREY…AQNAIAVNEF (213 aa). The next 7 helical transmembrane spans lie at 521–541, 554–574, 609–629, 640–660, 664–684, 694–714, and 753–773; these read FVYI…MTLF, GAVF…NGFS, IPIT…VIGF, LLLL…MGAL, IIVA…MGGF, WWIW…IAVN, and IGAG…AVAL. The tract at residues 808–830 is disordered; sequence LGKSSSEKGNDVRRSASSRSMSS. Residues 812-821 show a composition bias toward basic and acidic residues; it reads SSEKGNDVRR. Residues 855–1107 form the ABC transporter 2 domain; the sequence is ITFDDIRYAV…HLIKYFEGID (253 aa). 900-907 is an ATP binding site; it reads GVSGAGKT. Residues 1180 to 1394 enclose the ABC transmembrane type-2 2 domain; it reads TQCMACFWKQ…TLYGLIASQF (215 aa). 7 consecutive transmembrane segments (helical) span residues 1199–1219, 1239–1259, 1287–1307, 1314–1334, 1344–1364, 1375–1395, and 1421–1441; these read YTAV…TIFW, YIAV…VIAI, LPYL…MIGF, FFWY…YGMM, IAAI…GFIV, WYYY…SQFG, and FVGY…FIFA.

Belongs to the ABC transporter superfamily. ABCG family. PDR (TC 3.A.1.205) subfamily. Expressed in root hypodermal passage cells. Expressed in stem tissues, particularly the vasculature and nodes adjacent to leaf axils.

It is found in the cell membrane. Its function is as follows. Cellular strigolactone (SL) transporter required for the exudation of SL from the root to the soil. The presence of SL in the vicinity of the roots is required for development of symbiotic interactions with arbuscular mycorrhizal fungi (AMF). Transports SL in the above ground tissues and is required for the control of shoot branching. SL regulates plant shoot architecture by inhibiting the outgrowth of axillary buds. Involved in the regulation of shootward and outward directional strigolactone transport in roots. Due to its polar localization in root cells, mediates directional shootward strigolactone transport, as well as localized outward directional transport for exudation to the soil. This is Pleiotropic drug resistance protein 1 from Petunia hybrida (Petunia).